A 180-amino-acid chain; its full sequence is Shikimate kinase (180 aa).

Residue Gly-19–Thr-24 coordinates ATP. Position 23 (Thr-23) interacts with Mg(2+). Substrate-binding residues include Asp-41, Arg-65, and Gly-87. ATP is bound at residue Arg-125. Arg-144 lines the substrate pocket.

This sequence belongs to the shikimate kinase family. Monomer. Mg(2+) serves as cofactor.

Its subcellular location is the cytoplasm. It carries out the reaction shikimate + ATP = 3-phosphoshikimate + ADP + H(+). The protein operates within metabolic intermediate biosynthesis; chorismate biosynthesis; chorismate from D-erythrose 4-phosphate and phosphoenolpyruvate: step 5/7. Catalyzes the specific phosphorylation of the 3-hydroxyl group of shikimic acid using ATP as a cosubstrate. The protein is Shikimate kinase of Acinetobacter baumannii (strain SDF).